The following is a 205-amino-acid chain: MIGRLRGIILEKQPPQVLIEANGVGYEVHMPMTCFYELPELNQEAIIFTHFVVREDAQLLFGFNDKQERALFRELIKVNGVGPKLALAILSGMSATQFVSAVEREEIGALIKLPGVGKKTAERLVVEMKDRFKGLSGDLFNPVSDIPLASPASAESRASDPEAEAAAALVALGYKPQEASRMISKIARPEADCETLIRDALRAAL.

The interval 1 to 64 is domain I; sequence MIGRLRGIIL…EDAQLLFGFN (64 aa). The tract at residues 65–142 is domain II; it reads DKQERALFRE…KGLSGDLFNP (78 aa). A flexible linker region spans residues 143–156; the sequence is VSDIPLASPASAES. The segment at 157 to 205 is domain III; the sequence is RASDPEAEAAAALVALGYKPQEASRMISKIARPEADCETLIRDALRAAL.

The protein belongs to the RuvA family. As to quaternary structure, homotetramer. Forms an RuvA(8)-RuvB(12)-Holliday junction (HJ) complex. HJ DNA is sandwiched between 2 RuvA tetramers; dsDNA enters through RuvA and exits via RuvB. An RuvB hexamer assembles on each DNA strand where it exits the tetramer. Each RuvB hexamer is contacted by two RuvA subunits (via domain III) on 2 adjacent RuvB subunits; this complex drives branch migration. In the full resolvosome a probable DNA-RuvA(4)-RuvB(12)-RuvC(2) complex forms which resolves the HJ.

It localises to the cytoplasm. Functionally, the RuvA-RuvB-RuvC complex processes Holliday junction (HJ) DNA during genetic recombination and DNA repair, while the RuvA-RuvB complex plays an important role in the rescue of blocked DNA replication forks via replication fork reversal (RFR). RuvA specifically binds to HJ cruciform DNA, conferring on it an open structure. The RuvB hexamer acts as an ATP-dependent pump, pulling dsDNA into and through the RuvAB complex. HJ branch migration allows RuvC to scan DNA until it finds its consensus sequence, where it cleaves and resolves the cruciform DNA. The protein is Holliday junction branch migration complex subunit RuvA of Pectobacterium carotovorum subsp. carotovorum (strain PC1).